The following is a 421-amino-acid chain: Testin (421 aa).

One can recognise a PET domain in the interval 92–199; sequence MILTNPVAAK…GDVKLPQEMD (108 aa). LIM zinc-binding domains are found at residues 234 to 297, 299 to 359, and 362 to 421; these read YSCY…CDSE, PRCA…NHAV, and QGCH…KMMS.

The protein belongs to the prickle / espinas / testin family. Interacts via LIM domain 1 with ZYX. Interacts (via LIM domain 3) with ENAH and VASP. Interacts with ALKBH4, talin, actin, alpha-actinin, GRIP1 and PXN. Interacts (via LIM domain 2) with ACTL7A (via N-terminus). Heterodimer with ACTL7A; the heterodimer interacts with ENAH to form a heterotrimer.

The protein localises to the cytoplasm. It is found in the cell junction. The protein resides in the focal adhesion. Its function is as follows. Scaffold protein that may play a role in cell adhesion, cell spreading and in the reorganization of the actin cytoskeleton. Plays a role in the regulation of cell proliferation. May act as a tumor suppressor. The polypeptide is Testin (TES) (Loxodonta africana (African elephant)).